Consider the following 155-residue polypeptide: MADVPKREVENVEFVFEVMGSPGEGIDAVDLGDALRALNLNPTLALIEKLGGTKKRNEKKIKLDEFLPIYSQVKKEKEQGCYEDFIECLKLYDKEENGTMMLAELQHALLALGESLDDEQVETLFADCMDPEDDEGFIPYSQFVQRLMSDPVVFD.

EF-hand domains lie at 7–41 (REVE…LNLN) and 80–115 (GCYE…LGES).

In terms of assembly, myosin is a hexamer of 2 heavy chains and 4 light chains.

This chain is Myosin light chain alkali (Mlc1), found in Drosophila simulans (Fruit fly).